Consider the following 229-residue polypeptide: Uracil-DNA glycosylase (229 aa).

Catalysis depends on D65, which acts as the Proton acceptor.

Belongs to the uracil-DNA glycosylase (UDG) superfamily. UNG family.

The protein localises to the cytoplasm. It carries out the reaction Hydrolyzes single-stranded DNA or mismatched double-stranded DNA and polynucleotides, releasing free uracil.. Excises uracil residues from the DNA which can arise as a result of misincorporation of dUMP residues by DNA polymerase or due to deamination of cytosine. The polypeptide is Uracil-DNA glycosylase (Oceanobacillus iheyensis (strain DSM 14371 / CIP 107618 / JCM 11309 / KCTC 3954 / HTE831)).